A 308-amino-acid polypeptide reads, in one-letter code: Probable dimethyladenosine transferase (308 aa).

A compositionally biased stretch (basic residues) spans 1 to 11; sequence MGKTSKVKKTK. The disordered stretch occupies residues 1 to 24; it reads MGKTSKVKKTKAGSSTGNVQSLPF. Polar residues predominate over residues 12-24; the sequence is AGSSTGNVQSLPF. The S-adenosyl-L-methionine site is built by H31, L33, G58, E79, D107, and N122.

Belongs to the class I-like SAM-binding methyltransferase superfamily. rRNA adenine N(6)-methyltransferase family. In terms of assembly, part of the small subunit (SSU) processome, composed of more than 70 proteins and the RNA chaperone small nucleolar RNA (snoRNA) U3.

It is found in the nucleus. The protein resides in the nucleolus. The catalysed reaction is adenosine(1779)/adenosine(1780) in 18S rRNA + 4 S-adenosyl-L-methionine = N(6)-dimethyladenosine(1779)/N(6)-dimethyladenosine(1780) in 18S rRNA + 4 S-adenosyl-L-homocysteine + 4 H(+). In terms of biological role, specifically dimethylates two adjacent adenosines in the loop of a conserved hairpin near the 3'-end of 18S rRNA in the 40S particle. Involved in the pre-rRNA processing steps leading to small-subunit rRNA production independently of its RNA-modifying catalytic activity. Part of the small subunit (SSU) processome, first precursor of the small eukaryotic ribosomal subunit. During the assembly of the SSU processome in the nucleolus, many ribosome biogenesis factors, an RNA chaperone and ribosomal proteins associate with the nascent pre-rRNA and work in concert to generate RNA folding, modifications, rearrangements and cleavage as well as targeted degradation of pre-ribosomal RNA by the RNA exosome. In Caenorhabditis elegans, this protein is Probable dimethyladenosine transferase.